The primary structure comprises 301 residues: Phosphoribosylaminoimidazole-succinocarboxamide synthase (301 aa).

Belongs to the SAICAR synthetase family.

The catalysed reaction is 5-amino-1-(5-phospho-D-ribosyl)imidazole-4-carboxylate + L-aspartate + ATP = (2S)-2-[5-amino-1-(5-phospho-beta-D-ribosyl)imidazole-4-carboxamido]succinate + ADP + phosphate + 2 H(+). It participates in purine metabolism; IMP biosynthesis via de novo pathway; 5-amino-1-(5-phospho-D-ribosyl)imidazole-4-carboxamide from 5-amino-1-(5-phospho-D-ribosyl)imidazole-4-carboxylate: step 1/2. The protein is Phosphoribosylaminoimidazole-succinocarboxamide synthase (ADE1) of Cyberlindnera jadinii (Torula yeast).